The primary structure comprises 408 residues: MVRVRAVVMARDDSSGGWLPVGGGGLSQVSVCRVRGARPEGGARQGHYVIHGERLRDQKTTLECTLRPGLVYNKVNPIFHHWSLGDCKFGLTFQSPAEADEFQKSLLAALAALSRGSLTPSSSSSSSSPSQDTAETPCPLTSHVDSDSSSSHSRQETPPTAPIATVESAAAFPLATRPQRRRSSAQSYPPLLPFTGIPEPSESLAGAGSQGWGSRGYEDYRRSGPPPPPLALSTCVVRFAKTGALRGAALGPPVSLPAPLTEAAPPAPPARPPPGPGPTPAPAKASPEAEEAARCVHCRALFRRRADGRGGRCAEAPDPGRLLVRRLSCLWCAESLLYHCLSDAEGDFSDPCACEPGHPRPAARWAALAALSLAVPCLCCYAPLRACHWVAARCGCAGCGGRHEEAAR.

One can recognise a WH1 domain in the interval 1-113; that stretch reads MVRVRAVVMA…KSLLAALAAL (113 aa). The tract at residues 118 to 226 is disordered; sequence LTPSSSSSSS…YEDYRRSGPP (109 aa). The segment covering 120 to 130 has biased composition (low complexity); that stretch reads PSSSSSSSSPS. One can recognise a KBD domain in the interval 192–242; sequence LPFTGIPEPSESLAGAGSQGWGSRGYEDYRRSGPPPPPLALSTCVVRFAKT. Arg238 carries the post-translational modification Asymmetric dimethylarginine. The residue at position 246 (Arg246) is an Omega-N-methylarginine. Positions 256–286 are disordered; that stretch reads LPAPLTEAAPPAPPARPPPGPGPTPAPAKAS. The span at 265–281 shows a compositional bias: pro residues; sequence PPAPPARPPPGPGPTPA. The 112-residue stretch at 294–405 folds into the SPR domain; the sequence is RCVHCRALFR…CAGCGGRHEE (112 aa).

Interacts with palmitoyltransferase ZDHHC17/HIP14; the interaction leads to palmitoylation of SPRED3. Phosphorylated on tyrosine. Post-translationally, palmitoylated by ZDHHC17/HIP14. In terms of processing, ubiquitinated. In terms of tissue distribution, brain specific.

Its subcellular location is the cell membrane. Tyrosine kinase substrate that inhibits growth-factor-mediated activation of MAP kinase. Inhibits fibroblast growth factor (FGF)-induced retinal lens fiber differentiation, probably by inhibiting FGF-mediated phosphorylation of ERK1/2. Inhibits TGFB-induced epithelial-to-mesenchymal transition in lens epithelial cells. The protein is Sprouty-related, EVH1 domain-containing protein 3 (Spred3) of Mus musculus (Mouse).